Reading from the N-terminus, the 208-residue chain is V-type ATP synthase subunit D (208 aa).

It belongs to the V-ATPase D subunit family.

In terms of biological role, produces ATP from ADP in the presence of a proton gradient across the membrane. This is V-type ATP synthase subunit D from Streptococcus pyogenes serotype M49 (strain NZ131).